We begin with the raw amino-acid sequence, 383 residues long: Beta-1,3-galactosyltransferase 4 (383 aa).

Topologically, residues 1–8 (MPLSLFRR) are cytoplasmic. The helical transmembrane segment at 9–29 (LLLAALLLVIIWTLFGPSGIG) threads the bilayer. The Lumenal portion of the chain corresponds to 30-383 (EELLSLSLAS…RCRVIAWLHS (354 aa)). N-linked (GlcNAc...) asparagine glycosylation occurs at asparagine 149.

It belongs to the glycosyltransferase 31 family.

The protein localises to the golgi apparatus membrane. The catalysed reaction is a ganglioside GM2 (d18:1(4E)) + UDP-alpha-D-galactose = a ganglioside GM1 (d18:1(4E)) + UDP + H(+). It catalyses the reaction a ganglioside GM2 + UDP-alpha-D-galactose = a ganglioside GM1 + UDP + H(+). It carries out the reaction a ganglioside GD2 (d18:1(4E)) + UDP-alpha-D-galactose = a ganglioside GD1b (d18:1(4E)) + UDP + H(+). The enzyme catalyses a ganglioside GA2 (d18:1(4E)) + UDP-alpha-D-galactose = a ganglioside GA1 (d18:1(4E)) + UDP + H(+). The protein operates within protein modification; protein glycosylation. Functionally, involved in GM1/GD1B/GA1 ganglioside biosynthesis. This chain is Beta-1,3-galactosyltransferase 4 (B3GALT4), found in Canis lupus familiaris (Dog).